Consider the following 316-residue polypeptide: HPr kinase/phosphorylase (316 aa).

Residues His141 and Lys162 contribute to the active site. 156-163 (GESGVGKS) is a binding site for ATP. A Mg(2+)-binding site is contributed by Ser163. Asp180 (proton acceptor; for phosphorylation activity. Proton donor; for dephosphorylation activity) is an active-site residue. Residues 204 to 213 (MEIRGIGIID) are important for the catalytic mechanism of both phosphorylation and dephosphorylation. Glu205 provides a ligand contact to Mg(2+). Residue Arg246 is part of the active site. Residues 267–272 (PVKVGR) form an important for the catalytic mechanism of dephosphorylation region.

Belongs to the HPrK/P family. As to quaternary structure, homohexamer. Mg(2+) serves as cofactor.

It catalyses the reaction [HPr protein]-L-serine + ATP = [HPr protein]-O-phospho-L-serine + ADP + H(+). The enzyme catalyses [HPr protein]-O-phospho-L-serine + phosphate + H(+) = [HPr protein]-L-serine + diphosphate. Its function is as follows. Catalyzes the ATP- as well as the pyrophosphate-dependent phosphorylation of a specific serine residue in HPr, a phosphocarrier protein of the phosphoenolpyruvate-dependent sugar phosphotransferase system (PTS). HprK/P also catalyzes the pyrophosphate-producing, inorganic phosphate-dependent dephosphorylation (phosphorolysis) of seryl-phosphorylated HPr (P-Ser-HPr). The two antagonistic activities of HprK/P are regulated by several intracellular metabolites, which change their concentration in response to the absence or presence of rapidly metabolisable carbon sources (glucose, fructose, etc.) in the growth medium. Therefore, by controlling the phosphorylation state of HPr, HPrK/P is a sensor enzyme that plays a major role in the regulation of carbon metabolism and sugar transport: it mediates carbon catabolite repression (CCR), and regulates PTS-catalyzed carbohydrate uptake and inducer exclusion. In Lactobacillus delbrueckii subsp. bulgaricus (strain ATCC 11842 / DSM 20081 / BCRC 10696 / JCM 1002 / NBRC 13953 / NCIMB 11778 / NCTC 12712 / WDCM 00102 / Lb 14), this protein is HPr kinase/phosphorylase.